Reading from the N-terminus, the 137-residue chain is Transcription antitermination protein NusB (137 aa).

It belongs to the NusB family.

Functionally, involved in transcription antitermination. Required for transcription of ribosomal RNA (rRNA) genes. Binds specifically to the boxA antiterminator sequence of the ribosomal RNA (rrn) operons. This is Transcription antitermination protein NusB from Actinobacillus pleuropneumoniae serotype 5b (strain L20).